A 138-amino-acid polypeptide reads, in one-letter code: Thioredoxin H2-1 (138 aa).

Positions 1–20 (MGGAFSTSKPKPAAGEEGGE) are disordered. Residues 12–129 (PAAGEEGGES…LEKTINTLRS (118 aa)) enclose the Thioredoxin domain. Residues Cys55 and Cys58 each act as nucleophile in the active site. The cysteines at positions 55 and 58 are disulfide-linked.

The protein belongs to the thioredoxin family. Plant H-type subfamily.

The protein resides in the cytoplasm. Its function is as follows. Probable thiol-disulfide oxidoreductase that may be involved in the redox regulation of a number of cytosolic enzymes. The protein is Thioredoxin H2-1 of Oryza sativa subsp. japonica (Rice).